A 181-amino-acid polypeptide reads, in one-letter code: Oligoribonuclease (181 aa).

The Exonuclease domain maps to 8–171 (LIWIDLEMTG…QDIQESIAEL (164 aa)). Residue tyrosine 129 is part of the active site.

This sequence belongs to the oligoribonuclease family.

The protein resides in the cytoplasm. In terms of biological role, 3'-to-5' exoribonuclease specific for small oligoribonucleotides. In Shewanella oneidensis (strain ATCC 700550 / JCM 31522 / CIP 106686 / LMG 19005 / NCIMB 14063 / MR-1), this protein is Oligoribonuclease.